A 670-amino-acid chain; its full sequence is Neutral ceramidase (670 aa).

Residues 1–24 (MSRSAFTALLLSCVLLALSMPARA) form the signal peptide. A Mg(2+)-binding site is contributed by His61. The substrate site is built by Asn84, Gln92, and Asp111. His121 contributes to the Zn(2+) binding site. Ser130 provides a ligand contact to substrate. A Zn(2+)-binding site is contributed by His228. The active-site Nucleophile is the Ser274. Cys346 and Cys394 are joined by a disulfide. Residue Glu435 coordinates Zn(2+). Tyr469 contacts substrate. Tyr472 contributes to the Zn(2+) binding site. 3 residues coordinate Mg(2+): Asp603, Asp605, and Thr608. Residues 644–670 (NAKNFWTQKISEIGGSTRSFEVLGTTP) are required for correct folding and localization.

Belongs to the neutral ceramidase family. As to quaternary structure, homodimer. The cofactor is Zn(2+). Mg(2+) is required as a cofactor.

The protein localises to the secreted. It catalyses the reaction an N-acylsphing-4-enine + H2O = sphing-4-enine + a fatty acid. Its activity is regulated as follows. Inhibited by EDTA, EGTA and D/L-sphinganine D-erythro-sphingosine. L-erythro-sphingosine is a less powerful inhibitor. Stimulated by glycerophospholipids: cardiolipin is the most effective, followed by phosphatidic acid, phosphatidylethanolamine and phosphatidylglycerol, whereas phosphatidylcholine, lysophosphatidic acid and diacylglycerol are less effective. Its function is as follows. Catalyzes the cleavage of the N-acyl linkage of the ceramides (Cers) to yield sphingosine (Sph) and free fatty acid at an optimal pH of 8-9. Also catalyzes the synthesis of Cers from Sph and fatty acid. This chain is Neutral ceramidase, found in Pseudomonas aeruginosa (strain ATCC 15692 / DSM 22644 / CIP 104116 / JCM 14847 / LMG 12228 / 1C / PRS 101 / PAO1).